A 202-amino-acid chain; its full sequence is Ras-related protein Rab-2B (202 aa).

Residue 31–38 (GDSAVGKS) participates in GTP binding. Positions 53–61 (SDFTIGVEF) match the Effector region motif. GTP contacts are provided by residues 79-83 (DTAGQ) and 137-140 (NKAD).

Belongs to the small GTPase superfamily. Rab family. Post-translationally, this sequence lacks the C-terminal cysteine motifs subject to isoprenylation in other Rab proteins.

The protein is Ras-related protein Rab-2B (rab2B) of Dictyostelium discoideum (Social amoeba).